We begin with the raw amino-acid sequence, 312 residues long: Ribosomal protein L11 methyltransferase (312 aa).

Residues Thr163, Gly184, Asp206, and Asn248 each coordinate S-adenosyl-L-methionine.

It belongs to the methyltransferase superfamily. PrmA family.

The protein resides in the cytoplasm. It catalyses the reaction L-lysyl-[protein] + 3 S-adenosyl-L-methionine = N(6),N(6),N(6)-trimethyl-L-lysyl-[protein] + 3 S-adenosyl-L-homocysteine + 3 H(+). In terms of biological role, methylates ribosomal protein L11. The polypeptide is Ribosomal protein L11 methyltransferase (Clostridium botulinum (strain Hall / ATCC 3502 / NCTC 13319 / Type A)).